A 436-amino-acid polypeptide reads, in one-letter code: UPF0597 protein YhaM (436 aa).

Belongs to the UPF0597 family.

This chain is UPF0597 protein YhaM, found in Salmonella paratyphi C (strain RKS4594).